A 283-amino-acid chain; its full sequence is 4-hydroxy-3-methylbut-2-enyl diphosphate reductase (283 aa).

Position 12 (Cys-12) interacts with [4Fe-4S] cluster. Residues His-41 and His-74 each coordinate (2E)-4-hydroxy-3-methylbut-2-enyl diphosphate. 2 residues coordinate dimethylallyl diphosphate: His-41 and His-74. Isopentenyl diphosphate is bound by residues His-41 and His-74. Cys-96 contacts [4Fe-4S] cluster. His-124 is a (2E)-4-hydroxy-3-methylbut-2-enyl diphosphate binding site. His-124 serves as a coordination point for dimethylallyl diphosphate. Isopentenyl diphosphate is bound at residue His-124. The active-site Proton donor is Glu-126. Thr-161 contacts (2E)-4-hydroxy-3-methylbut-2-enyl diphosphate. Cys-189 lines the [4Fe-4S] cluster pocket. (2E)-4-hydroxy-3-methylbut-2-enyl diphosphate is bound by residues Ser-217, Asn-219, and Ser-261. Ser-217, Asn-219, and Ser-261 together coordinate dimethylallyl diphosphate. Isopentenyl diphosphate is bound by residues Ser-217, Asn-219, and Ser-261.

This sequence belongs to the IspH family. [4Fe-4S] cluster is required as a cofactor.

It catalyses the reaction isopentenyl diphosphate + 2 oxidized [2Fe-2S]-[ferredoxin] + H2O = (2E)-4-hydroxy-3-methylbut-2-enyl diphosphate + 2 reduced [2Fe-2S]-[ferredoxin] + 2 H(+). The enzyme catalyses dimethylallyl diphosphate + 2 oxidized [2Fe-2S]-[ferredoxin] + H2O = (2E)-4-hydroxy-3-methylbut-2-enyl diphosphate + 2 reduced [2Fe-2S]-[ferredoxin] + 2 H(+). Its pathway is isoprenoid biosynthesis; dimethylallyl diphosphate biosynthesis; dimethylallyl diphosphate from (2E)-4-hydroxy-3-methylbutenyl diphosphate: step 1/1. The protein operates within isoprenoid biosynthesis; isopentenyl diphosphate biosynthesis via DXP pathway; isopentenyl diphosphate from 1-deoxy-D-xylulose 5-phosphate: step 6/6. Functionally, catalyzes the conversion of 1-hydroxy-2-methyl-2-(E)-butenyl 4-diphosphate (HMBPP) into a mixture of isopentenyl diphosphate (IPP) and dimethylallyl diphosphate (DMAPP). Acts in the terminal step of the DOXP/MEP pathway for isoprenoid precursor biosynthesis. This is 4-hydroxy-3-methylbut-2-enyl diphosphate reductase from Anaeromyxobacter sp. (strain Fw109-5).